Consider the following 300-residue polypeptide: Actin-related protein 2/3 complex subunit 2 (300 aa).

Residues lysine 275 and lysine 295 each carry the N6-acetyllysine modification.

This sequence belongs to the ARPC2 family. Component of the Arp2/3 complex composed of ACTR2/ARP2, ACTR3/ARP3, ARPC1B/p41-ARC, ARPC2/p34-ARC, ARPC3/p21-ARC, ARPC4/p20-ARC and ARPC5/p16-ARC. Interacts with SHANK3; the interaction probably mediates the association of SHANK3 with the Arp2/3 complex.

Its subcellular location is the cytoplasm. The protein localises to the cytoskeleton. The protein resides in the cell projection. It localises to the synapse. It is found in the synaptosome. Its subcellular location is the nucleus. Its function is as follows. Actin-binding component of the Arp2/3 complex, a multiprotein complex that mediates actin polymerization upon stimulation by nucleation-promoting factor (NPF). The Arp2/3 complex mediates the formation of branched actin networks in the cytoplasm, providing the force for cell motility. Seems to contact the mother actin filament. In addition to its role in the cytoplasmic cytoskeleton, the Arp2/3 complex also promotes actin polymerization in the nucleus, thereby regulating gene transcription and repair of damaged DNA. The Arp2/3 complex promotes homologous recombination (HR) repair in response to DNA damage by promoting nuclear actin polymerization, leading to drive motility of double-strand breaks (DSBs). The chain is Actin-related protein 2/3 complex subunit 2 from Rattus norvegicus (Rat).